The primary structure comprises 321 residues: Prephenate dehydratase (321 aa).

Positions 3–189 (RIAYLGPEGT…ARTRFVLVGR (187 aa)) constitute a Prephenate dehydratase domain. The ACT domain maps to 203–280 (SAVLRIDNQP…ADVRYLGSWP (78 aa)).

In terms of assembly, homodimer.

It carries out the reaction prephenate + H(+) = 3-phenylpyruvate + CO2 + H2O. It participates in amino-acid biosynthesis; L-phenylalanine biosynthesis; phenylpyruvate from prephenate: step 1/1. In Mycobacterium bovis (strain ATCC BAA-935 / AF2122/97), this protein is Prephenate dehydratase (pheA).